A 497-amino-acid chain; its full sequence is RNA polymerase sigma factor SigA (497 aa).

Disordered regions lie at residues 1–20 (MSTD…PELS) and 62–86 (KTLH…HAPL). Positions 63–73 (TLHENKESDVP) are enriched in basic and acidic residues. Residues 74–84 (KKRRGRKPKHA) are compositionally biased toward basic residues. The segment at 250–320 (LVTSNLRLVV…TRAIADQART (71 aa)) is sigma-70 factor domain-2. The Interaction with polymerase core subunit RpoC motif lies at 274–277 (DLIQ). The interval 329–410 (ETINRLAKAE…DTDAQTPDEF (82 aa)) is sigma-70 factor domain-3. Residues 423–478 (LLNNNLSEQEELIVRMRIGMPPYNEPKTLDEVGQKILIPREKIRQIENKAIRKLRH) are sigma-70 factor domain-4. Residues 451-470 (LDEVGQKILIPREKIRQIEN) constitute a DNA-binding region (H-T-H motif).

This sequence belongs to the sigma-70 factor family. RpoD/SigA subfamily. Interacts transiently with the RNA polymerase catalytic core.

It localises to the cytoplasm. Sigma factors are initiation factors that promote the attachment of RNA polymerase to specific initiation sites and are then released. This sigma factor is the primary sigma factor during exponential growth. This chain is RNA polymerase sigma factor SigA, found in Mycoplasma genitalium (strain ATCC 33530 / DSM 19775 / NCTC 10195 / G37) (Mycoplasmoides genitalium).